We begin with the raw amino-acid sequence, 398 residues long: tRNA-specific 2-thiouridylase MnmA (398 aa).

Residues Ala-20–Ser-27 and Leu-46 each bind ATP. Catalysis depends on Cys-114, which acts as the Nucleophile. Cys-114 and Cys-210 are joined by a disulfide. Residue Gly-138 participates in ATP binding. An interaction with tRNA region spans residues Arg-160–Gln-162. The Cysteine persulfide intermediate role is filled by Cys-210.

The protein belongs to the MnmA/TRMU family.

The protein localises to the cytoplasm. The catalysed reaction is S-sulfanyl-L-cysteinyl-[protein] + uridine(34) in tRNA + AH2 + ATP = 2-thiouridine(34) in tRNA + L-cysteinyl-[protein] + A + AMP + diphosphate + H(+). In terms of biological role, catalyzes the 2-thiolation of uridine at the wobble position (U34) of tRNA, leading to the formation of s(2)U34. The protein is tRNA-specific 2-thiouridylase MnmA of Brucella melitensis biotype 1 (strain ATCC 23456 / CCUG 17765 / NCTC 10094 / 16M).